Reading from the N-terminus, the 241-residue chain is Alkylated DNA repair protein ALKBH6 homolog (241 aa).

One can recognise a Fe2OG dioxygenase domain in the interval Ala-87–Pro-232. Positions 105, 107, and 181 each coordinate Fe cation. Positions 223 and 229 each coordinate 2-oxoglutarate.

It belongs to the alkB family. Requires Fe(2+) as cofactor.

Its subcellular location is the nucleus. Probable RNA demethylase that binds to both N6-methyladenosine-containing- (m(6)A) and C5-methylcytidine-containing- (m(5)C) RNAs, thus being a probable m(6)A and m(5)C eraser. Involved in responses to abscisic acid (ABA) via the modulation of the expression of ABA signaling-related genes (e.g. ABI3 and ABI4). Acts as a negative regulator during seed germination under abiotic stresses (e.g. salt, cold and ABA). Positive modulator of seedling growth and survival in response to drought and heat, but counteracts tolerance to salt. This Arabidopsis thaliana (Mouse-ear cress) protein is Alkylated DNA repair protein ALKBH6 homolog.